Here is a 603-residue protein sequence, read N- to C-terminus: Cholinesterase (603 aa).

The signal sequence occupies residues 1 to 29 (MQTQHTKVTQTHFLLWILLLCMPFGKSHT). Residue Asn-86 is glycosylated (N-linked (GlcNAc...) asparagine). Residues Cys-94 and Cys-121 are joined by a disulfide bond. A glycan (N-linked (GlcNAc...) asparagine) is linked at Asn-135. A substrate-binding site is contributed by 145–146 (GG). Ser-227 functions as the Acyl-ester intermediate in the catalytic mechanism. At Ser-227 the chain carries Phosphoserine. The N-linked (GlcNAc...) asparagine glycan is linked to Asn-270. Cysteines 281 and 292 form a disulfide. Glu-354 functions as the Charge relay system in the catalytic mechanism. N-linked (GlcNAc...) asparagine glycosylation occurs at Asn-370. A disulfide bridge links Cys-429 with Cys-548. Residue His-467 is the Charge relay system of the active site. N-linked (GlcNAc...) asparagine glycans are attached at residues Asn-484, Asn-510, and Asn-515.

It belongs to the type-B carboxylesterase/lipase family. Homotetramer; disulfide-linked. Dimer of dimers. Present in most cells except erythrocytes.

The protein localises to the secreted. The catalysed reaction is an acylcholine + H2O = a carboxylate + choline + H(+). Its function is as follows. Esterase with broad substrate specificity. Contributes to the inactivation of the neurotransmitter acetylcholine. Can degrade neurotoxic organophosphate esters. In Mus musculus (Mouse), this protein is Cholinesterase (Bche).